The following is a 154-amino-acid chain: Myoglobin (154 aa).

One can recognise a Globin domain in the interval glycine 2 to lysine 148. Residue serine 4 is modified to Phosphoserine. Histidine 65 contributes to the nitrite binding site. Histidine 65 is a binding site for O2. The residue at position 68 (threonine 68) is a Phosphothreonine. Histidine 94 serves as a coordination point for heme b.

Belongs to the globin family. As to quaternary structure, monomeric.

It localises to the cytoplasm. The protein resides in the sarcoplasm. The catalysed reaction is Fe(III)-heme b-[protein] + nitric oxide + H2O = Fe(II)-heme b-[protein] + nitrite + 2 H(+). The enzyme catalyses H2O2 + AH2 = A + 2 H2O. In terms of biological role, monomeric heme protein which primary function is to store oxygen and facilitate its diffusion within muscle tissues. Reversibly binds oxygen through a pentacoordinated heme iron and enables its timely and efficient release as needed during periods of heightened demand. Depending on the oxidative conditions of tissues and cells, and in addition to its ability to bind oxygen, it also has a nitrite reductase activity whereby it regulates the production of bioactive nitric oxide. Under stress conditions, like hypoxia and anoxia, it also protects cells against reactive oxygen species thanks to its pseudoperoxidase activity. This Lagostomus maximus (Plains viscacha) protein is Myoglobin (MB).